We begin with the raw amino-acid sequence, 296 residues long: Phosphatidylserine decarboxylase proenzyme (296 aa).

Active-site charge relay system; for autoendoproteolytic cleavage activity residues include Asp-113, His-169, and Ser-256. Ser-256 (schiff-base intermediate with substrate; via pyruvic acid; for decarboxylase activity) is an active-site residue. Pyruvic acid (Ser); by autocatalysis is present on Ser-256.

Belongs to the phosphatidylserine decarboxylase family. PSD-B subfamily. Prokaryotic type II sub-subfamily. Heterodimer of a large membrane-associated beta subunit and a small pyruvoyl-containing alpha subunit. Pyruvate serves as cofactor. Is synthesized initially as an inactive proenzyme. Formation of the active enzyme involves a self-maturation process in which the active site pyruvoyl group is generated from an internal serine residue via an autocatalytic post-translational modification. Two non-identical subunits are generated from the proenzyme in this reaction, and the pyruvate is formed at the N-terminus of the alpha chain, which is derived from the carboxyl end of the proenzyme. The autoendoproteolytic cleavage occurs by a canonical serine protease mechanism, in which the side chain hydroxyl group of the serine supplies its oxygen atom to form the C-terminus of the beta chain, while the remainder of the serine residue undergoes an oxidative deamination to produce ammonia and the pyruvoyl prosthetic group on the alpha chain. During this reaction, the Ser that is part of the protease active site of the proenzyme becomes the pyruvoyl prosthetic group, which constitutes an essential element of the active site of the mature decarboxylase.

It localises to the cell membrane. It catalyses the reaction a 1,2-diacyl-sn-glycero-3-phospho-L-serine + H(+) = a 1,2-diacyl-sn-glycero-3-phosphoethanolamine + CO2. It participates in phospholipid metabolism; phosphatidylethanolamine biosynthesis; phosphatidylethanolamine from CDP-diacylglycerol: step 2/2. In terms of biological role, catalyzes the formation of phosphatidylethanolamine (PtdEtn) from phosphatidylserine (PtdSer). This Clostridium kluyveri (strain ATCC 8527 / DSM 555 / NBRC 12016 / NCIMB 10680 / K1) protein is Phosphatidylserine decarboxylase proenzyme.